Consider the following 537-residue polypeptide: Pheophorbide a oxygenase, chloroplastic (537 aa).

A chloroplast-targeting transit peptide spans 1-49 (MSVVLLSSTSATITKSQSKKIPFLSPTTKFPLKVSISPSRSKLFHNPLR). The disordered stretch occupies residues 51-77 (AAPPSVPTSDSTEEKRIEEEYGGDKEE). Residues 62–77 (TEEKRIEEEYGGDKEE) show a composition bias toward basic and acidic residues. A Rieske domain is found at 88–200 (WYPVSLVEDL…TMVSQGLLFV (113 aa)). Residues C130, H132, C150, and H153 each contribute to the [2Fe-2S] cluster site.

As to quaternary structure, interacts with HCAR, SGR1, RCCR, PPH and the LHCII complex. Part of a SGR1-CCE-LHCII complex, which acts in chlorophyll breakdown.

It is found in the plastid. The protein resides in the chloroplast thylakoid membrane. It carries out the reaction pheophorbide a + 2 reduced [2Fe-2S]-[ferredoxin] + O2 + 2 H(+) = red chlorophyll catabolite + 2 oxidized [2Fe-2S]-[ferredoxin]. The protein operates within porphyrin-containing compound metabolism; chlorophyll degradation. Might be regulated by a phosphorylation/dephosphorylation mechanism. Functionally, catalyzes the key reaction of chlorophyll catabolism, porphyrin macrocycle cleavage of pheophorbide a (pheide a) to a primary fluorescent catabolite (pFCC). Works in a two-step reaction with red chlorophyll catabolite reductase (RCCR). Creates the intermediate RCC through the opening of the porphyrin macrocycle by the introduction of one atom of molecular oxygen at the alpha-methine bridge. Seems to be specific for pheide a. Belongs to the chlorophyll catabolic enzymes (CCEs). In Arabidopsis thaliana (Mouse-ear cress), this protein is Pheophorbide a oxygenase, chloroplastic (PAO).